The following is a 164-amino-acid chain: UPF0114 protein Spro_2386 (164 aa).

A run of 3 helical transmembrane segments spans residues 15-35 (LLAPVYFGLSLALLALSIKFF), 53-73 (LVLTLLSLIDMALVGGLLVMV), and 136-156 (LMWYVIIHLTFVLSAFVMGYL).

It belongs to the UPF0114 family.

The protein resides in the cell membrane. In Serratia proteamaculans (strain 568), this protein is UPF0114 protein Spro_2386.